The chain runs to 359 residues: 3-dehydroquinate synthase (359 aa).

Residues 69–74, 103–107, 127–128, Lys-140, and Lys-149 each bind NAD(+); these read DAETGK, GAATD, and TT. Residues Glu-182, His-244, and His-260 each coordinate Zn(2+).

It belongs to the sugar phosphate cyclases superfamily. Dehydroquinate synthase family. Co(2+) serves as cofactor. Requires Zn(2+) as cofactor. NAD(+) is required as a cofactor.

The protein resides in the cytoplasm. The catalysed reaction is 7-phospho-2-dehydro-3-deoxy-D-arabino-heptonate = 3-dehydroquinate + phosphate. It participates in metabolic intermediate biosynthesis; chorismate biosynthesis; chorismate from D-erythrose 4-phosphate and phosphoenolpyruvate: step 2/7. Catalyzes the conversion of 3-deoxy-D-arabino-heptulosonate 7-phosphate (DAHP) to dehydroquinate (DHQ). The chain is 3-dehydroquinate synthase from Corynebacterium diphtheriae (strain ATCC 700971 / NCTC 13129 / Biotype gravis).